A 117-amino-acid chain; its full sequence is Large ribosomal subunit protein bL20 (117 aa).

This sequence belongs to the bacterial ribosomal protein bL20 family.

Its function is as follows. Binds directly to 23S ribosomal RNA and is necessary for the in vitro assembly process of the 50S ribosomal subunit. It is not involved in the protein synthesizing functions of that subunit. The protein is Large ribosomal subunit protein bL20 of Mesomycoplasma hyopneumoniae (strain 7448) (Mycoplasma hyopneumoniae).